A 669-amino-acid chain; its full sequence is DNA ligase (669 aa).

NAD(+) is bound by residues 32–36, 81–82, and Glu-113; these read DAEYD and SL. The active-site N6-AMP-lysine intermediate is Lys-115. NAD(+)-binding residues include Arg-136, Glu-173, Lys-290, and Lys-314. Cys-408, Cys-411, Cys-426, and Cys-432 together coordinate Zn(2+). The 78-residue stretch at 592-669 folds into the BRCT domain; that stretch reads AVDSALAGKI…DEQALIEFLK (78 aa).

Belongs to the NAD-dependent DNA ligase family. LigA subfamily. It depends on Mg(2+) as a cofactor. Requires Mn(2+) as cofactor.

It carries out the reaction NAD(+) + (deoxyribonucleotide)n-3'-hydroxyl + 5'-phospho-(deoxyribonucleotide)m = (deoxyribonucleotide)n+m + AMP + beta-nicotinamide D-nucleotide.. In terms of biological role, DNA ligase that catalyzes the formation of phosphodiester linkages between 5'-phosphoryl and 3'-hydroxyl groups in double-stranded DNA using NAD as a coenzyme and as the energy source for the reaction. It is essential for DNA replication and repair of damaged DNA. This Vibrio cholerae serotype O1 (strain ATCC 39315 / El Tor Inaba N16961) protein is DNA ligase.